Reading from the N-terminus, the 159-residue chain is U-actitoxin-Avd13a/b (159 aa).

The signal sequence occupies residues 1-18 (MKSIFLVFFAVCLVKAEA). A propeptide spanning residues 19–26 (GKGRKREP) is cleaved from the precursor. 2 cysteine pairs are disulfide-bonded: Cys33-Cys45 and Cys36-Cys52. The propeptide occupies 59-60 (EP). Disulfide bonds link Cys67–Cys79 and Cys70–Cys86. The propeptide occupies 93–94 (EP). 2 cysteine pairs are disulfide-bonded: Cys101–Cys113 and Cys104–Cys120. A propeptide spanning residues 127–128 (EP) is cleaved from the precursor. 2 disulfides stabilise this stretch: Cys135-Cys147 and Cys138-Cys154.

Belongs to the sea anemone BBH family.

It is found in the secreted. It localises to the nematocyst. Inhibits ion channels. The chain is U-actitoxin-Avd13a/b from Anemonia viridis (Snakelocks anemone).